We begin with the raw amino-acid sequence, 280 residues long: Putative high affinity immunoglobulin gamma Fc receptor IB (280 aa).

An N-terminal signal peptide occupies residues 1 to 15 (MWFLTTLLLWVPVDG). At 16-198 (QVDTTKAVIT…LQLPTPVWFH (183 aa)) the chain is on the extracellular side. Ig-like C2-type domains are found at residues 22–101 (AVIT…LEIH) and 95–184 (PIQL…ISQY). 2 disulfide bridges follow: C43–C85 and C124–C168. N-linked (GlcNAc...) asparagine glycosylation is found at N59, N152, and N163. The helical transmembrane segment at 199–219 (VLFYLAVGIMFLVNTVLWVTI) threads the bilayer. The Cytoplasmic portion of the chain corresponds to 220 to 280 (RKELKRKKKW…VHRKEPQGAT (61 aa)). The segment at 258-280 (KCQEQKEEQLQEGVHRKEPQGAT) is disordered.

This sequence belongs to the immunoglobulin superfamily. FCGR1 family.

It is found in the cell membrane. In terms of biological role, may bind to the Fc region of immunoglobulins gamma with a low affinity compared to FCGR1A. May function in the humoral immune response. In Homo sapiens (Human), this protein is Putative high affinity immunoglobulin gamma Fc receptor IB.